We begin with the raw amino-acid sequence, 218 residues long: MILQISNAVDTDTVKSIVAGLDAGQFSDGKKTAGWAAKDVKNNQQLSGKKSEAATQVLLDRLQQNALVQSVMRPKQVARVTINRYQQGEYYGTHMDDSLMNGVRTDISFTLGLSPLSDFEGGELVIEDASGERSWRLGQGDILMYPSHYLHRVNPVTKGSRLAMIGWVQSLVKQPNYRELLFDIEQSLKAEFDANGKSENFDRLTKVFHNLLREWSDV.

The Fe2OG dioxygenase domain occupies 76–170 (QVARVTINRY…RLAMIGWVQS (95 aa)). Fe cation-binding residues include His-94, Asp-96, and His-151. Arg-161 contributes to the 2-oxoglutarate binding site.

The cofactor is Fe(2+). Requires L-ascorbate as cofactor.

The polypeptide is PKHD-type hydroxylase IL0759 (Idiomarina loihiensis (strain ATCC BAA-735 / DSM 15497 / L2-TR)).